We begin with the raw amino-acid sequence, 614 residues long: MRGRVSPLMLLLGILVLASVSATQAKSPYRKTENPCAQRCLQSCQQEPDDLKQKACESRCTKLEYDPRCVYDTGATNQRHPPGERTRGRQPGDYDDDRRQPRREEGGRWGPAEPREREREEDWRQPREDWRRPSHQQPRKIRPEGREGEQEWGTPGSEVREETSRNNPFYFPSRRFSTRYGNQNGRIRVLQRFDQRSKQFQNLQNHRIVQIEARPNTLVLPKHADADNILVIQQGQATVTVANGNNRKSFNLDEGHALRIPSGFISYILNRHDNQNLRVAKISMPVNTPGQFEDFFPASSRDQSSYLQGFSRNTLEAAFNAEFNEIRRVLLEENAGGEQEERGQRRRSTRSSDNEGVIVKVSKEHVQELTKHAKSVSKKGSEEEDITNPINLRDGEPDLSNNFGRLFEVKPDKKNPQLQDLDMMLTCVEIKEGALMLPHFNSKAMVIVVVNKGTGNLELVAVRKEQQQRGRREQEWEEEEEDEEEEGSNREVRRYTARLKEGDVFIMPAAHPVAINASSELHLLGFGINAENNHRIFLAGDKDNVIDQIEKQAKDLAFPGSGEQVEKLIKNQRESHFVSARPQSQSPSSPEKEDQEEENQGGKGPLLSILKAFN.

A signal peptide spans 1–25 (MRGRVSPLMLLLGILVLASVSATQA). Disordered regions lie at residues 72–177 (DTGA…RRFS), 334–356 (NAGG…DNEG), 372–397 (HAKS…DGEP), and 464–491 (KEQQ…SNRE). Basic and acidic residues predominate over residues 81–132 (PPGERTRGRQPGDYDDDRRQPRREEGGRWGPAEPREREREEDWRQPREDWRR). In terms of domain architecture, Cupin type-1 1 spans 169–327 (FYFPSRRFST…AFNAEFNEIR (159 aa)). Positions 390–566 (INLRDGEPDL…AFPGSGEQVE (177 aa)) constitute a Cupin type-1 2 domain. A compositionally biased stretch (basic and acidic residues) spans 464-474 (KEQQQRGRREQ). Positions 475 to 486 (EWEEEEEDEEEE) are enriched in acidic residues. Asn516 carries an N-linked (GlcNAc...) asparagine glycan. The disordered stretch occupies residues 572–614 (QRESHFVSARPQSQSPSSPEKEDQEEENQGGKGPLLSILKAFN).

Belongs to the 7S seed storage protein family.

The chain is Allergen Ara h 1, clone P17 from Arachis hypogaea (Peanut).